Here is a 251-residue protein sequence, read N- to C-terminus: Hydroxyacylglutathione hydrolase (251 aa).

Positions 53, 55, 57, 58, 110, 127, and 165 each coordinate Zn(2+).

The protein belongs to the metallo-beta-lactamase superfamily. Glyoxalase II family. In terms of assembly, monomer. Zn(2+) serves as cofactor.

The catalysed reaction is an S-(2-hydroxyacyl)glutathione + H2O = a 2-hydroxy carboxylate + glutathione + H(+). It functions in the pathway secondary metabolite metabolism; methylglyoxal degradation; (R)-lactate from methylglyoxal: step 2/2. Functionally, thiolesterase that catalyzes the hydrolysis of S-D-lactoyl-glutathione to form glutathione and D-lactic acid. This Shigella dysenteriae serotype 1 (strain Sd197) protein is Hydroxyacylglutathione hydrolase.